The primary structure comprises 475 residues: Ribulose bisphosphate carboxylase large chain (475 aa).

Positions 1–2 (MV) are excised as a propeptide. At Pro-3 the chain carries N-acetylproline. Residue Lys-14 is modified to N6,N6,N6-trimethyllysine. Substrate contacts are provided by Asn-123 and Thr-173. Residue Lys-175 is the Proton acceptor of the active site. Lys-177 lines the substrate pocket. 3 residues coordinate Mg(2+): Lys-201, Asp-203, and Glu-204. The residue at position 201 (Lys-201) is an N6-carboxylysine. His-294 acts as the Proton acceptor in catalysis. 3 residues coordinate substrate: Arg-295, His-327, and Ser-379.

Belongs to the RuBisCO large chain family. Type I subfamily. Heterohexadecamer of 8 large chains and 8 small chains; disulfide-linked. The disulfide link is formed within the large subunit homodimers. Mg(2+) serves as cofactor. The disulfide bond which can form in the large chain dimeric partners within the hexadecamer appears to be associated with oxidative stress and protein turnover.

The protein localises to the plastid. The protein resides in the chloroplast. It carries out the reaction 2 (2R)-3-phosphoglycerate + 2 H(+) = D-ribulose 1,5-bisphosphate + CO2 + H2O. The catalysed reaction is D-ribulose 1,5-bisphosphate + O2 = 2-phosphoglycolate + (2R)-3-phosphoglycerate + 2 H(+). RuBisCO catalyzes two reactions: the carboxylation of D-ribulose 1,5-bisphosphate, the primary event in carbon dioxide fixation, as well as the oxidative fragmentation of the pentose substrate in the photorespiration process. Both reactions occur simultaneously and in competition at the same active site. This is Ribulose bisphosphate carboxylase large chain from Tetradesmus obliquus (Green alga).